The sequence spans 232 residues: Ion-translocating oxidoreductase complex subunit E (232 aa).

Transmembrane regions (helical) follow at residues 39–59, 69–89, 93–113, 128–148, and 182–202; these read LGLG…ISLV, IPVF…LVNA, GLYM…IIIG, AFDG…LGAT, and SFLL…LIAL.

This sequence belongs to the NqrDE/RnfAE family. As to quaternary structure, the complex is composed of six subunits: RnfA, RnfB, RnfC, RnfD, RnfE and RnfG.

The protein resides in the cell inner membrane. Part of a membrane-bound complex that couples electron transfer with translocation of ions across the membrane. This is Ion-translocating oxidoreductase complex subunit E from Shewanella oneidensis (strain ATCC 700550 / JCM 31522 / CIP 106686 / LMG 19005 / NCIMB 14063 / MR-1).